Reading from the N-terminus, the 356-residue chain is Sensor protein BasS (356 aa).

Topologically, residues 1-13 are cytoplasmic; that stretch reads MRFQRRAMTLRQR. A helical membrane pass occupies residues 14–34; that stretch reads LMLTIGLILLVFQLISTFWLW. The Periplasmic segment spans residues 35–64; sequence HESTEQIQLFEQALRDNRNNDRHIMHEIRE. The helical transmembrane segment at 65–88 threads the bilayer; it reads AVASLIVPGVFMVSLTLLICYQAV. An HAMP domain is found at 89–141; that stretch reads RRITRPLAELQKELEARTADNLAPIAIHSSTLEIESVVSAINQLVTRLTTTLD. Topologically, residues 89-356 are cytoplasmic; it reads RRITRPLAEL…TRAWVLLKKA (268 aa). Residues 149-356 form the Histidine kinase domain; sequence DVAHELRTPL…TRAWVLLKKA (208 aa). Histidine 152 bears the Phosphohistidine; by autocatalysis mark.

Autophosphorylated.

It is found in the cell inner membrane. The enzyme catalyses ATP + protein L-histidine = ADP + protein N-phospho-L-histidine.. Member of the two-component regulatory system BasS/BasR. Autophosphorylates and activates BasR by phosphorylation. Plays a role in the adaptation of the organism to the host environment, in particular to neutrophils, and therefore it plays a role in virulence as well. This is Sensor protein BasS (basS) from Salmonella typhimurium (strain LT2 / SGSC1412 / ATCC 700720).